The sequence spans 303 residues: Ribonuclease P protein subunit p40 (303 aa).

As to quaternary structure, component of nuclear RNase P and RNase MRP ribonucleoproteins. RNase P consists of a catalytic RNA moiety and about 10 protein subunits; POP1, POP4, POP5, POP7, RPP14, RPP21, RPP25, RPP30, RPP38 and RPP40. Within the RNase P complex, POP1, POP7 and RPP25 form the 'finger' subcomplex, POP5, RPP14, RPP40 and homodimeric RPP30 form the 'palm' subcomplex, and RPP21, POP4 and RPP38 form the 'wrist' subcomplex. All subunits of the RNase P complex interact with the catalytic RNA. Several subunits of RNase P are also part of the RNase MRP complex. RNase MRP consists of a catalytic RNA moiety and about 8 protein subunits; POP1, POP7, RPP25, RPP30, RPP38, RPP40 and possibly also POP4 and POP5.

It localises to the nucleus. It is found in the nucleolus. In terms of biological role, component of ribonuclease P, a ribonucleoprotein complex that generates mature tRNA molecules by cleaving their 5'-ends. Also a component of the MRP ribonuclease complex, which cleaves pre-rRNA sequences. In Bos taurus (Bovine), this protein is Ribonuclease P protein subunit p40 (RPP40).